Here is a 61-residue protein sequence, read N- to C-terminus: MKYTEIKEKSVAELNALLKEKKVLLFTLKQKLKTMQLSNPNEIRALKKEIARINTAISASK.

It belongs to the universal ribosomal protein uL29 family.

The sequence is that of Large ribosomal subunit protein uL29 from Campylobacter curvus (strain 525.92).